Here is a 702-residue protein sequence, read N- to C-terminus: Vacuolar protein sorting-associated protein 52 homolog (702 aa).

Residues 505-535 (KEMGAKMEAVLENSEDSIEQLLTRMSAMQQT) adopt a coiled-coil conformation.

This sequence belongs to the VPS52 family. In terms of assembly, component of the Golgi-associated retrograde protein (GARP) complex, also called VFT (VPS fifty-three) complex, composed of vps-51, vps-52, vps-53 and vps-54. Within the complex interacts with vps-53 and vps-54. Interacts with the small GTPases rab-6.1 and rab-6.2. Ubiquitously expressed, with particularly strong expression in neuronal cells. Specifically expressed in head and tail neurons and in the pharynx and ventral cord motor neurons.

It localises to the golgi apparatus. The protein resides in the trans-Golgi network. Its subcellular location is the perikaryon. It is found in the cytoplasm. The protein localises to the perinuclear region. Acts as a component of the GARP complex that is involved in retrograde transport from early and late endosomes to the trans-Golgi network (TGN). The GARP complex facilitates tethering as well as SNARE complex assembly at the Golgi. Plays a role in the trafficking of cargo to dense-core vesicles, probably through association with the EARP-interacting protein eipr-1. Important for neuronal function. The protein is Vacuolar protein sorting-associated protein 52 homolog of Caenorhabditis elegans.